The following is a 151-amino-acid chain: Aspartate carbamoyltransferase regulatory chain (151 aa).

Zn(2+) contacts are provided by cysteine 108, cysteine 113, cysteine 138, and cysteine 141.

The protein belongs to the PyrI family. In terms of assembly, contains catalytic and regulatory chains. Zn(2+) serves as cofactor.

Functionally, involved in allosteric regulation of aspartate carbamoyltransferase. This Pyrobaculum neutrophilum (strain DSM 2338 / JCM 9278 / NBRC 100436 / V24Sta) (Thermoproteus neutrophilus) protein is Aspartate carbamoyltransferase regulatory chain.